The primary structure comprises 92 residues: Large ribosomal subunit protein eL31 (92 aa).

It belongs to the eukaryotic ribosomal protein eL31 family.

In Halobacterium salinarum (strain ATCC 29341 / DSM 671 / R1), this protein is Large ribosomal subunit protein eL31.